A 261-amino-acid polypeptide reads, in one-letter code: uncharacterized protein (261 aa).

Residues Ile-33, Lys-60, Asp-78, and Asn-105 each coordinate NADP(+). The active-site Proton donor is Ser-157. Positions 172, 176, and 206 each coordinate NADP(+). Tyr-172 (proton acceptor) is an active-site residue. The Lowers pKa of active site Tyr role is filled by Lys-176.

It belongs to the short-chain dehydrogenases/reductases (SDR) family.

The protein resides in the cytoplasm. It localises to the nucleus. This is an uncharacterized protein from Schizosaccharomyces pombe (strain 972 / ATCC 24843) (Fission yeast).